Here is a 333-residue protein sequence, read N- to C-terminus: Ketol-acid reductoisomerase (NADP(+)) (333 aa).

The region spanning Met-1–Thr-179 is the KARI N-terminal Rossmann domain. Residues Tyr-22–Gln-25, Ser-48, Ser-50, and Asp-80–Gln-83 contribute to the NADP(+) site. His-105 is an active-site residue. An NADP(+)-binding site is contributed by Gly-131. A KARI C-terminal knotted domain is found at Thr-180–Val-325. Mg(2+)-binding residues include Asp-188, Glu-192, Glu-224, and Glu-228. Ser-249 is a binding site for substrate.

It belongs to the ketol-acid reductoisomerase family. Requires Mg(2+) as cofactor.

It catalyses the reaction (2R)-2,3-dihydroxy-3-methylbutanoate + NADP(+) = (2S)-2-acetolactate + NADPH + H(+). The catalysed reaction is (2R,3R)-2,3-dihydroxy-3-methylpentanoate + NADP(+) = (S)-2-ethyl-2-hydroxy-3-oxobutanoate + NADPH + H(+). Its pathway is amino-acid biosynthesis; L-isoleucine biosynthesis; L-isoleucine from 2-oxobutanoate: step 2/4. The protein operates within amino-acid biosynthesis; L-valine biosynthesis; L-valine from pyruvate: step 2/4. Its function is as follows. Involved in the biosynthesis of branched-chain amino acids (BCAA). Catalyzes an alkyl-migration followed by a ketol-acid reduction of (S)-2-acetolactate (S2AL) to yield (R)-2,3-dihydroxy-isovalerate. In the isomerase reaction, S2AL is rearranged via a Mg-dependent methyl migration to produce 3-hydroxy-3-methyl-2-ketobutyrate (HMKB). In the reductase reaction, this 2-ketoacid undergoes a metal-dependent reduction by NADPH to yield (R)-2,3-dihydroxy-isovalerate. The protein is Ketol-acid reductoisomerase (NADP(+)) of Mycobacterium leprae (strain TN).